The primary structure comprises 837 residues: Protein TRANSPARENT TESTA 9 (837 aa).

One can recognise an FPL domain in the interval 42–192 (LRSIAEILTY…AVRALTLNVY (151 aa)). Residues 366–386 (TEEANQQCSSTAAGMSDDGNS) form a disordered region. The span at 368–378 (EANQQCSSTAA) shows a compositional bias: polar residues.

The protein belongs to the CLEC16A/gop-1 family.

It localises to the golgi apparatus membrane. Functionally, involved in membrane trafficking and vacuole development through membrane fusion at the vacuole. Required for membrane trafficking machinery and accumulation of flavonoids in the seed coat. This is Protein TRANSPARENT TESTA 9 from Arabidopsis thaliana (Mouse-ear cress).